The chain runs to 361 residues: MSEIVPPEVRPKPAVPAKPSHVAPPSSAPFVPSPQGTGGEGQGSGRGSALLGYIGIDTIIEQMRKKTMKAGFDFNIMVVGQSGLGKSTLVNTLFKSQVSRRSTSWSRDEKIPKTVEIKSVSHVIEEGGVKMKLTVVDTPGFGDQINNDNCWEPISKHINEQYEKFLKEEVNIARKKRIPDTRVHCCLYFISPTGHSLRQLDIEFMKHLSRVVNIIPVIAKSDTLTPEEKTEFKQRVRKELEVCGIECYPQKEFDEDMEDKSDNDKIRETMPFAVVGSDKEYQVNGKRVLGRKTAWGVVEVENPNHCEFSLLRDFMIRSHLQDLKEVTHNIHYETYRAKRLNDNGGLHPISSSGHDTQESNL.

The tract at residues 1–46 (MSEIVPPEVRPKPAVPAKPSHVAPPSSAPFVPSPQGTGGEGQGSGR) is disordered. Low complexity predominate over residues 15-34 (VPAKPSHVAPPSSAPFVPSP). Gly residues predominate over residues 36 to 46 (GTGGEGQGSGR). One can recognise a Septin-type G domain in the interval 70 to 342 (AGFDFNIMVV…ETYRAKRLND (273 aa)). Positions 80 to 87 (GQSGLGKS) are G1 motif. GTP-binding positions include 80 to 87 (GQSGLGKS) and threonine 114. Positions 137–140 (DTPG) are G3 motif. A G4 motif region spans residues 219 to 222 (AKSD). GTP-binding positions include 220 to 228 (KSDTLTPEE), glycine 276, and arginine 291. Positions 341 to 361 (NDNGGLHPISSSGHDTQESNL) are disordered. The span at 349–361 (ISSSGHDTQESNL) shows a compositional bias: polar residues.

Belongs to the TRAFAC class TrmE-Era-EngA-EngB-Septin-like GTPase superfamily. Septin GTPase family.

It localises to the cytoplasm. May be involved in cytokinesis. In Danio rerio (Zebrafish), this protein is Neuronal-specific septin-3.